We begin with the raw amino-acid sequence, 438 residues long: uncharacterized protein (438 aa).

An FAD-binding PCMH-type domain is found at 23–193; that stretch reads IHAKPPVVVV…VNATIRLTAA (171 aa). FAD contacts are provided by residues 55-59, 60-61, Gln65, Asp117, Thr122, 128-132, Ile183, Tyr393, and 430-433; these read VRGSG, HS, SVGGF, and APGY. His60 carries the post-translational modification Pros-8alpha-FAD histidine.

This sequence belongs to the oxygen-dependent FAD-linked oxidoreductase family. FAD serves as cofactor.

The FAS-operon encodes genes involved in cytokinin production and in host plant fasciation (leafy gall). This is an uncharacterized protein from Rhodococcoides fascians (Rhodococcus fascians).